The chain runs to 104 residues: Large ribosomal subunit protein uL24 (104 aa).

It belongs to the universal ribosomal protein uL24 family. Part of the 50S ribosomal subunit.

In terms of biological role, one of two assembly initiator proteins, it binds directly to the 5'-end of the 23S rRNA, where it nucleates assembly of the 50S subunit. Functionally, one of the proteins that surrounds the polypeptide exit tunnel on the outside of the subunit. This Pseudomonas fluorescens (strain SBW25) protein is Large ribosomal subunit protein uL24.